The primary structure comprises 511 residues: Maturase K (511 aa).

The protein belongs to the intron maturase 2 family. MatK subfamily.

It localises to the plastid. The protein localises to the chloroplast. Its function is as follows. Usually encoded in the trnK tRNA gene intron. Probably assists in splicing its own and other chloroplast group II introns. This chain is Maturase K, found in Hordeum bulbosum (Bulbous barley).